A 299-amino-acid chain; its full sequence is Non-homologous end-joining factor 1 (299 aa).

Residues 1-135 (MEELEQGLLM…ASPSLVSQHL (135 aa)) form a globular head region. The stretch at 128–170 (PSLVSQHLIRPLMGMSLALQCQVRELATLLHMKDLEIQDYQES) forms a coiled coil. Ser-132, Ser-203, Ser-245, and Ser-251 each carry phosphoserine; by PRKDC. The tract at residues 224 to 288 (QEVQVGQKHQ…GPLQRPQLSK (65 aa)) is C-terminal tail. Positions 255–266 (NQPEQLVSSAPT) are enriched in polar residues. A disordered region spans residues 255 to 299 (NQPEQLVSSAPTLSAPEKESTGTSGPLQRPQLSKVKRKKPRGLFS). Ser-263 is modified (phosphoserine). Thr-266 is subject to Phosphothreonine. Ser-287 bears the Phosphoserine mark. Residues 288–299 (KVKRKKPRGLFS) are compositionally biased toward basic residues. Positions 289 to 299 (VKRKKPRGLFS) match the XLM motif.

This sequence belongs to the XRCC4-XLF family. XLF subfamily. Homodimer; mainly exists as a homodimer when not associated with XRCC4. Interacts with XRCC4; the interaction is direct and is mediated via a head-to-head interaction between N-terminal head regions. Component of the core long-range non-homologous end joining (NHEJ) complex (also named DNA-PK complex) composed of PRKDC, LIG4, XRCC4, XRCC6/Ku70, XRCC5/Ku86 and NHEJ1/XLF. Additional component of the NHEJ complex includes PAXX. Following autophosphorylation, PRKDC dissociates from DNA, leading to formation of the short-range NHEJ complex, composed of LIG4, XRCC4, XRCC6/Ku70, XRCC5/Ku86 and NHEJ1/XLF. Interacts with POLL (DNA polymerase lambda); promoting POLL recruitment to double-strand breaks (DSBs) and stimulation of the end-filling activity of POLL. Phosphorylated by PRKDC at the C-terminus in response to DNA damage. Phosphorylations by PRKDC at the C-terminus of XRCC4 and NHEJ1/XLF are highly redundant and regulate ability of the XRCC4-NHEJ1/XLF subcomplex to bridge DNA. Phosphorylation does not prevent interaction with XRCC4 but disrupts ability to bridge DNA and promotes detachment from DNA. As to expression, ubiquitously expressed.

Its subcellular location is the nucleus. It localises to the chromosome. Its function is as follows. DNA repair protein involved in DNA non-homologous end joining (NHEJ); it is required for double-strand break (DSB) repair and V(D)J recombination and is also involved in telomere maintenance. Plays a key role in NHEJ by promoting the ligation of various mismatched and non-cohesive ends. Together with PAXX, collaborates with DNA polymerase lambda (POLL) to promote joining of non-cohesive DNA ends. May act in concert with XRCC5-XRCC6 (Ku) to stimulate XRCC4-mediated joining of blunt ends and several types of mismatched ends that are non-complementary or partially complementary. In some studies, has been shown to associate with XRCC4 to form alternating helical filaments that bridge DNA and act like a bandage, holding together the broken DNA until it is repaired. Alternatively, it has also been shown that rather than forming filaments, a single NHEJ1 dimer interacts through both head domains with XRCC4 to promote the close alignment of DNA ends. The XRCC4-NHEJ1/XLF subcomplex binds to the DNA fragments of a DSB in a highly diffusive manner and robustly bridges two independent DNA molecules, holding the broken DNA fragments in close proximity to one other. The mobility of the bridges ensures that the ends remain accessible for further processing by other repair factors. Binds DNA in a length-dependent manner. This chain is Non-homologous end-joining factor 1, found in Homo sapiens (Human).